A 198-amino-acid polypeptide reads, in one-letter code: MEAHMDRLSLTGALLVATPLLEDPNFYRSVVFVIDDTPDEGTLGVILNRPSELGVGEVLAEWGEHVSQPAVMFAGGPVGQDAGLALAVPDDGQRPLGWKSLDAMDAKTWPNGLGTVDLDTPPQLVADALRQMRVFAGYAGWSAGQLRAEIDQGAWYVLPATVDDVFCADPRGLWSRVLRRQGGELAFVATFPHDPTLN.

It belongs to the UPF0301 (AlgH) family.

This chain is UPF0301 protein Tfu_2389, found in Thermobifida fusca (strain YX).